Here is a 77-residue protein sequence, read N- to C-terminus: Putative defensin-like protein 162 (77 aa).

An N-terminal signal peptide occupies residues 1-27 (MAKQLCSYMFISMFILSAFLALPSAEG). 4 disulfide bridges follow: Cys-34-Cys-77, Cys-44-Cys-63, Cys-49-Cys-71, and Cys-53-Cys-73.

Belongs to the DEFL family.

It is found in the secreted. The chain is Putative defensin-like protein 162 (LCR37) from Arabidopsis thaliana (Mouse-ear cress).